Reading from the N-terminus, the 872-residue chain is Alanine--tRNA ligase (872 aa).

Positions 567, 571, 669, and 673 each coordinate Zn(2+).

Belongs to the class-II aminoacyl-tRNA synthetase family. Requires Zn(2+) as cofactor.

Its subcellular location is the cytoplasm. The catalysed reaction is tRNA(Ala) + L-alanine + ATP = L-alanyl-tRNA(Ala) + AMP + diphosphate. Functionally, catalyzes the attachment of alanine to tRNA(Ala) in a two-step reaction: alanine is first activated by ATP to form Ala-AMP and then transferred to the acceptor end of tRNA(Ala). Also edits incorrectly charged Ser-tRNA(Ala) and Gly-tRNA(Ala) via its editing domain. The sequence is that of Alanine--tRNA ligase from Streptococcus pyogenes serotype M1.